Reading from the N-terminus, the 543-residue chain is Excitatory amino acid transporter 1 (543 aa).

Residues 1 to 47 are Cytoplasmic-facing; it reads MTKSNGEEPRMGSRMERFQQGVRKRTLLAKKKVQNITKEDVKSYLFR. A helical membrane pass occupies residues 48–68; it reads NAFVLLTVSAVIVGTILGFAL. Topologically, residues 69–86 are extracellular; the sequence is RPYKMSYREVKYFSFPGE. The chain crosses the membrane as a helical span at residues 87–108; it reads LLMRMLQMLVLPLIISSLVTGM. Residues 109 to 122 are Cytoplasmic-facing; the sequence is AALDSKASGKMGMR. A helical membrane pass occupies residues 123-145; it reads AVVYYMTTTIIAVVIGIIIVIII. Residues 146 to 236 are Extracellular-facing; that stretch reads HPGKGTKENM…IREEMVPVPG (91 aa). A helical membrane pass occupies residues 237 to 260; it reads SVNGVNALGLVVFSMCFGFVIGNM. Over 261–269 the chain is Cytoplasmic; it reads KEQGQALRE. Residues 270-297 form a helical membrane-spanning segment; that stretch reads FFDSLNEAIMRLVAVIMWYAPLGILFLI. Residues 298–318 lie on the Extracellular side of the membrane; the sequence is AGKILEMEDMGVIGGQLAMYT. A helical membrane pass occupies residues 319–340; sequence VTVIVGLLIHAVIVLPLLYFLV. At 341–345 the chain is on the cytoplasmic side; it reads TRKNP. Positions 346–376 form an intramembrane region, discontinuously helical; that stretch reads WVFIGGLLQALITALGTSSSSATLPITFKCL. Position 363-365 (363-365) interacts with L-aspartate; that stretch reads SSS. The Cytoplasmic portion of the chain corresponds to 377 to 385; it reads EENNGVDKR. The chain crosses the membrane as a helical span at residues 386-412; that stretch reads ITRFVLPVGATINMDGTALYEALAAIF. Glycine 394, threonine 396, and asparagine 398 together coordinate Na(+). An L-aspartate-binding site is contributed by threonine 402. The Extracellular portion of the chain corresponds to 413 to 425; the sequence is IAQVNNFDLNFGQ. Positions 426–459 form an intramembrane region, discontinuously helical; the sequence is IITISITATAASIGAAGIPQAGLVTMVIVLTSVG. 443–447 contributes to the L-aspartate binding site; that stretch reads IPQAG. Residues 460 to 472 lie on the Extracellular side of the membrane; sequence LPTDDITLIIAVD. Residues 473-494 form a helical membrane-spanning segment; sequence WFLDRLRTTTNVLGDSLGAGIV. The L-aspartate site is built by aspartate 476 and asparagine 483. Na(+) contacts are provided by asparagine 483 and aspartate 487. Residues 495 to 543 lie on the Cytoplasmic side of the membrane; the sequence is EHLSRHELKNRDVEMGNSVIEENEMKKPYQLIAQDNEPEKPVADSETKM. Serine 512 is modified (phosphoserine). The tract at residues 522 to 543 is disordered; the sequence is PYQLIAQDNEPEKPVADSETKM. A compositionally biased stretch (basic and acidic residues) spans 531-543; it reads EPEKPVADSETKM.

It belongs to the dicarboxylate/amino acid:cation symporter (DAACS) (TC 2.A.23) family. SLC1A3 subfamily. In terms of assembly, homotrimer. Post-translationally, glycosylated. As to expression, detected in brain and cerebellum. Both isoform GLAST-1 and GLAST-1A are expressed in bone and brain. In brain isoform GLAST-1 is highly enriched in the Purkinje cell layer in cerebellum.

Its subcellular location is the cell membrane. It catalyses the reaction K(+)(in) + L-glutamate(out) + 3 Na(+)(out) + H(+)(out) = K(+)(out) + L-glutamate(in) + 3 Na(+)(in) + H(+)(in). The catalysed reaction is K(+)(in) + L-aspartate(out) + 3 Na(+)(out) + H(+)(out) = K(+)(out) + L-aspartate(in) + 3 Na(+)(in) + H(+)(in). It carries out the reaction D-aspartate(out) + K(+)(in) + 3 Na(+)(out) + H(+)(out) = D-aspartate(in) + K(+)(out) + 3 Na(+)(in) + H(+)(in). Functionally, sodium-dependent, high-affinity amino acid transporter that mediates the uptake of L-glutamate and also L-aspartate and D-aspartate. Functions as a symporter that transports one amino acid molecule together with two or three Na(+) ions and one proton, in parallel with the counter-transport of one K(+) ion. Plays a redundant role in the rapid removal of released glutamate from the synaptic cleft, which is essential for terminating the postsynaptic action of glutamate. The protein is Excitatory amino acid transporter 1 (Slc1a3) of Rattus norvegicus (Rat).